A 119-amino-acid polypeptide reads, in one-letter code: MLKSTTRHVHIFAADIRNDNFIASDTKLTLDVDPDNEFIWNDPALQKVYSEFDRLVAAYTGLALTEYNLRRIGSDLENFIRGLLQQGEIAYNLDSRVLNFSMGRPQVRGPGQIENRPGQ.

The protein belongs to the complex I NdhM subunit family. In terms of assembly, NDH-1 can be composed of about 15 different subunits; different subcomplexes with different compositions have been identified which probably have different functions.

It localises to the cell inner membrane. The catalysed reaction is a plastoquinone + NADH + (n+1) H(+)(in) = a plastoquinol + NAD(+) + n H(+)(out). The enzyme catalyses a plastoquinone + NADPH + (n+1) H(+)(in) = a plastoquinol + NADP(+) + n H(+)(out). NDH-1 shuttles electrons from an unknown electron donor, via FMN and iron-sulfur (Fe-S) centers, to quinones in the respiratory and/or the photosynthetic chain. The immediate electron acceptor for the enzyme in this species is believed to be plastoquinone. Couples the redox reaction to proton translocation, and thus conserves the redox energy in a proton gradient. Cyanobacterial NDH-1 also plays a role in inorganic carbon-concentration. The chain is NAD(P)H-quinone oxidoreductase subunit M from Gloeobacter violaceus (strain ATCC 29082 / PCC 7421).